We begin with the raw amino-acid sequence, 135 residues long: Transcription antitermination protein NusB (135 aa).

The protein belongs to the NusB family.

Involved in transcription antitermination. Required for transcription of ribosomal RNA (rRNA) genes. Binds specifically to the boxA antiterminator sequence of the ribosomal RNA (rrn) operons. The protein is Transcription antitermination protein NusB of Shewanella pealeana (strain ATCC 700345 / ANG-SQ1).